The following is a 312-amino-acid chain: Magnesium protoporphyrin IX methyltransferase, chloroplastic (312 aa).

The transit peptide at 1–39 (MPFAPSLLSSSSSVSQFLPRFPNATRFNVTPRSRAATVV) directs the protein to the chloroplast.

It belongs to the class I-like SAM-binding methyltransferase superfamily. Magnesium protoporphyrin O-methyltransferase family.

Its subcellular location is the plastid. The protein localises to the chloroplast membrane. It localises to the chloroplast thylakoid membrane. The enzyme catalyses Mg-protoporphyrin IX + S-adenosyl-L-methionine = Mg-protoporphyrin IX 13-monomethyl ester + S-adenosyl-L-homocysteine. It functions in the pathway porphyrin-containing compound metabolism; chlorophyll biosynthesis. With respect to regulation, regulated by the folate status via an increased concentration of S-adenosyl-homocysteine (AdoHcy), a potent inhibitor of most AdoMet-dependent methyltransferases. Converts Mg-protoporphyrin IX to Mg-protoporphyrin IX methylester using S-adenosyl-L-methionine as a cofactor. Involved in chloroplast-to-nucleus signaling by acting as a negative effector of nuclear photosynthetic gene expression. In Arabidopsis thaliana (Mouse-ear cress), this protein is Magnesium protoporphyrin IX methyltransferase, chloroplastic (CHLM).